We begin with the raw amino-acid sequence, 400 residues long: MIIKPKIRGFICTTTHPVGCEQNVREQIAFTKSKGAIENGPKKVLVIGASSGYGLSSRIAAAFGSGAATIGVFFEKPGTDKKTGTAGWYNSAAFDKVAKEEGLYAKSINGDAFSNEARATVIDLIKQDLGQIDMVVYSLASPVRKMPETGEVVRSVLKPIGQPYRSTAIDTNKDVIIEAEIEPATEEEVAATTTVMGGQDWELWMSALQEAGVLAEGTRTVAYSYIGSDITWPIYWHGALGKAKEDLDRASAAIDSQLAKIGGGANVAVLKSVVTQASSAIPVMPLYLAMVFKVMREKGIHEGCMDQIYRMFAERLYNNHNPAELTDDKNRLRLDDWELREDVQQACRELWPKVNDANLFAETDYQLYKDEFLKLFGFGVDGVDYDAEANPEADFEVITL.

Residues 48 to 53, 74 to 75, 111 to 112, and 139 to 140 each bind NAD(+); these read GASSGY, FE, DA, and LA. Tyrosine 225 serves as a coordination point for substrate. Tyrosine 235 functions as the Proton donor in the catalytic mechanism. NAD(+) is bound by residues lysine 244 and 273 to 275; that span reads VVT.

The protein belongs to the TER reductase family. Monomer.

It carries out the reaction a 2,3-saturated acyl-[ACP] + NAD(+) = a (2E)-enoyl-[ACP] + NADH + H(+). It participates in lipid metabolism; fatty acid biosynthesis. Functionally, involved in the final reduction of the elongation cycle of fatty acid synthesis (FAS II). Catalyzes the reduction of a carbon-carbon double bond in an enoyl moiety that is covalently linked to an acyl carrier protein (ACP). The protein is Enoyl-[acyl-carrier-protein] reductase [NADH] of Marinomonas sp. (strain MWYL1).